Consider the following 478-residue polypeptide: Cytochrome c-552 (478 aa).

The first 26 residues, 1–26 (MTRIKINARRIFSLLIPFFFFTSVHA), serve as a signal peptide directing secretion. His94 contributes to the heme c binding site. Heme-binding residues include Cys122, Cys125, and Lys126. Residues Cys160, Cys163, His164, Cys209, Cys212, and His213 each coordinate heme c. Glu215, Tyr216, Lys261, and Gln263 together coordinate Ca(2+). Tyr216 is a substrate binding site. His264 is a substrate binding site. Heme c contacts are provided by His275, Cys282, Cys285, His286, His301, Cys314, Cys317, His318, and His393.

Belongs to the cytochrome c-552 family. Requires Ca(2+) as cofactor. It depends on heme c as a cofactor.

Its subcellular location is the periplasm. The catalysed reaction is 6 Fe(III)-[cytochrome c] + NH4(+) + 2 H2O = 6 Fe(II)-[cytochrome c] + nitrite + 8 H(+). The protein operates within nitrogen metabolism; nitrate reduction (assimilation). Its function is as follows. Catalyzes the reduction of nitrite to ammonia, consuming six electrons in the process. This Escherichia coli O17:K52:H18 (strain UMN026 / ExPEC) protein is Cytochrome c-552.